The chain runs to 124 residues: Probable glycine cleavage system H protein (124 aa).

A Lipoyl-binding domain is found at 22–104 (TGRVGISEFA…FGDGWLVEID (83 aa)). Lys-63 bears the N6-lipoyllysine mark.

The protein belongs to the GcvH family. The glycine cleavage system is composed of four proteins: P, T, L and H. (R)-lipoate serves as cofactor.

The glycine cleavage system catalyzes the degradation of glycine. The H protein shuttles the methylamine group of glycine from the P protein to the T protein. The sequence is that of Probable glycine cleavage system H protein from Halobacterium salinarum (strain ATCC 700922 / JCM 11081 / NRC-1) (Halobacterium halobium).